The sequence spans 219 residues: Transmembrane protein 125 (219 aa).

Transmembrane regions (helical) follow at residues 36-56, 68-88, 114-134, and 147-167; these read LCFV…VALL, LATG…QLMS, ALVV…LAGL, and MLSV…GLLL.

The protein resides in the membrane. The protein is Transmembrane protein 125 (TMEM125) of Homo sapiens (Human).